A 393-amino-acid polypeptide reads, in one-letter code: Methylthioribose kinase (393 aa).

ATP contacts are provided by residues Asn-38, Lys-53, and 107–109 (EDL). Substrate is bound at residue Asp-225. ATP is bound at residue 242-244 (DPE). Arg-332 serves as a coordination point for substrate.

It belongs to the methylthioribose kinase family. As to quaternary structure, homodimer.

The catalysed reaction is 5-(methylsulfanyl)-D-ribose + ATP = 5-(methylsulfanyl)-alpha-D-ribose 1-phosphate + ADP + H(+). It participates in amino-acid biosynthesis; L-methionine biosynthesis via salvage pathway; S-methyl-5-thio-alpha-D-ribose 1-phosphate from S-methyl-5'-thioadenosine (hydrolase route): step 2/2. Its function is as follows. Catalyzes the phosphorylation of methylthioribose into methylthioribose-1-phosphate. The sequence is that of Methylthioribose kinase from Bacillus cereus (strain 03BB102).